The sequence spans 704 residues: SH3KBP1-binding protein 1 (704 aa).

The residue at position 2 (Ala-2) is an N-acetylalanine. Residues 19–88 (EVIHLNVGGK…LRTKELDPRG (70 aa)) enclose the BTB domain. The disordered stretch occupies residues 146 to 165 (VGPQQIGGRPAPVRRSNTMP). Thr-163 carries the post-translational modification Phosphothreonine. WD repeat units follow at residues 233–280 (RLDW…GGSE), 283–322 (VFHL…WQVQ), 324–359 (VQPI…LRMK), 428–466 (VHRS…GMIS), and 548–586 (LECE…DGLG). A disordered region spans residues 609-704 (PLTSSRASFP…PKNTLNETSF (96 aa)). Over residues 611 to 631 (TSSRASFPSPSPRTSLTSLHS) the composition is skewed to low complexity. The PXXXPR motif lies at 618–623 (PSPSPR). Phosphoserine occurs at positions 644 and 646. Residues 678–683 (PTPAPR) carry the PXXXPR motif.

This sequence belongs to the KCTD3 family. Monomer. Interacts with CUL3; interaction is direct and forms a 5:5 heterodecamer. Interacts (via PXXXPR motifs) with SH3KBP1 (via SH3 domains). Directly interacts with cathepsin B/CTSB.

Its subcellular location is the lysosome. Inhibits CBL-SH3KBP1 complex mediated down-regulation of EGFR signaling by sequestration of SH3KBP1. Binds to SH3KBP1 and prevents its interaction with CBL and inhibits translocation of SH3KBP1 to EGFR containing vesicles upon EGF stimulation. The sequence is that of SH3KBP1-binding protein 1 (Shkbp1) from Rattus norvegicus (Rat).